The primary structure comprises 130 residues: MQILQKIKNITLTSLELIHVRLDMARIELVEQKNFLITLLSALFVIFILLLVSFISLLFGLNSLLDPETKQIVFFAISAGAFFLILILLLLMRKILKKQRNFMVDTLTEVKHDIQAIKGALGSPSSKDQE.

2 helical membrane-spanning segments follow: residues 35–57 and 72–91; these read FLIT…FISL and IVFF…LLLL.

The protein localises to the cell membrane. This is an uncharacterized protein from Pasteurella multocida (strain Pm70).